A 518-amino-acid polypeptide reads, in one-letter code: Cytochrome P450 3A27 (518 aa).

Residue cysteine 447 coordinates heme.

This sequence belongs to the cytochrome P450 family. It depends on heme as a cofactor.

The protein localises to the endoplasmic reticulum membrane. It localises to the microsome membrane. The catalysed reaction is an organic molecule + reduced [NADPH--hemoprotein reductase] + O2 = an alcohol + oxidized [NADPH--hemoprotein reductase] + H2O + H(+). Functionally, cytochromes P450 are a group of heme-thiolate monooxygenases. In liver microsomes, this enzyme is involved in an NADPH-dependent electron transport pathway. It oxidizes a variety of structurally unrelated compounds, including steroids, fatty acids, and xenobiotics. The chain is Cytochrome P450 3A27 (cyp3a27) from Oncorhynchus mykiss (Rainbow trout).